The following is a 213-amino-acid chain: High frequency lysogenization protein HflD homolog (213 aa).

A coiled-coil region spans residues 79–122 (QGLNAELTRYTLSLMVLERKLSSAKGALNTLGDRINGLQRQLDH).

It belongs to the HflD family.

Its subcellular location is the cytoplasm. It is found in the cell inner membrane. The protein is High frequency lysogenization protein HflD homolog of Salmonella dublin (strain CT_02021853).